A 301-amino-acid chain; its full sequence is NADH-cytochrome b5 reductase 3 (301 aa).

The N-myristoyl glycine moiety is linked to residue Gly2. In terms of domain architecture, FAD-binding FR-type spans 40-152 (DIKYPLRLID…RGPSGLLVYQ (113 aa)). N6-acetyllysine is present on Lys42. The residue at position 43 (Tyr43) is a Phosphotyrosine. Positions 92, 93, 94, 109, 111, and 114 each coordinate FAD. Position 120 is an N6-acetyllysine (Lys120). Lys126, Met127, Ser128, and Thr185 together coordinate FAD.

The protein belongs to the flavoprotein pyridine nucleotide cytochrome reductase family. Component of a complex composed of cytochrome b5, NADH-cytochrome b5 reductase (CYB5R3) and MTARC2. Interacts with MTLN; the interaction is required to maintain cellular lipid composition and leads to stimulation of mitochondrial respiratory complex I activity. FAD serves as cofactor. As to expression, expressed at late stages of erythroid maturation.

Its subcellular location is the endoplasmic reticulum membrane. The protein resides in the mitochondrion outer membrane. It localises to the cytoplasm. The catalysed reaction is 2 Fe(III)-[cytochrome b5] + NADH = 2 Fe(II)-[cytochrome b5] + NAD(+) + H(+). Its function is as follows. Catalyzes the reduction of two molecules of cytochrome b5 using NADH as the electron donor. The polypeptide is NADH-cytochrome b5 reductase 3 (Homo sapiens (Human)).